Here is a 361-residue protein sequence, read N- to C-terminus: tRNA-specific 2-thiouridylase MnmA (361 aa).

ATP contacts are provided by residues 6-13 (AMSGGVDS) and leucine 32. Cysteine 99 serves as the catalytic Nucleophile. The cysteines at positions 99 and 196 are disulfide-linked. An ATP-binding site is contributed by glycine 123. Positions 145-147 (RDQ) are interaction with tRNA. Cysteine 196 serves as the catalytic Cysteine persulfide intermediate.

Belongs to the MnmA/TRMU family.

The protein resides in the cytoplasm. The enzyme catalyses S-sulfanyl-L-cysteinyl-[protein] + uridine(34) in tRNA + AH2 + ATP = 2-thiouridine(34) in tRNA + L-cysteinyl-[protein] + A + AMP + diphosphate + H(+). In terms of biological role, catalyzes the 2-thiolation of uridine at the wobble position (U34) of tRNA, leading to the formation of s(2)U34. The polypeptide is tRNA-specific 2-thiouridylase MnmA (Gluconobacter oxydans (strain 621H) (Gluconobacter suboxydans)).